Reading from the N-terminus, the 93-residue chain is YcgL domain-containing protein KPK_1976 (93 aa).

Positions 1-85 constitute a YcgL domain; sequence MFCVIYRSTK…PSENLLKKHL (85 aa).

The sequence is that of YcgL domain-containing protein KPK_1976 from Klebsiella pneumoniae (strain 342).